The following is a 547-amino-acid chain: Elongator complex protein 3 (547 aa).

The Radical SAM core domain maps to 82 to 372; it reads RTASGIAVVA…YRVQRDIPMP (291 aa). Cys-99, Cys-109, and Cys-112 together coordinate [4Fe-4S] cluster. Ser-161 is modified (phosphoserine). Position 164 (Lys-164) interacts with acetyl-CoA. An N6-methyllysine modification is found at Lys-229. Phosphotyrosine is present on Tyr-251. The region spanning 396–547 is the N-acetyltransferase domain; that stretch reads IQCRDVRTRE…QGPYMVKMLK (152 aa). Acetyl-CoA is bound by residues 474–477, 497–499, and Tyr-530; these read ELHV and FGM.

This sequence belongs to the ELP3 family. As to quaternary structure, component of the elongator complex which consists of ELP1, ELP2, ELP3, ELP4, ELP5 and ELP6. ELP1, ELP2 and ELP3 form the elongator core complex. Interacts with alpha-tubulin. Requires [4Fe-4S] cluster as cofactor. Post-translationally, tyrosine-phosphorylated. Also serine/threonine-phosphorylated.

Its subcellular location is the cytoplasm. The protein localises to the nucleus. The catalysed reaction is uridine(34) in tRNA + acetyl-CoA + S-adenosyl-L-methionine + H2O = 5-(carboxymethyl)uridine(34) in tRNA + 5'-deoxyadenosine + L-methionine + CoA + 2 H(+). It participates in tRNA modification; 5-methoxycarbonylmethyl-2-thiouridine-tRNA biosynthesis. Its function is as follows. Catalytic tRNA acetyltransferase subunit of the elongator complex which is required for multiple tRNA modifications, including mcm5U (5-methoxycarbonylmethyl uridine), mcm5s2U (5-methoxycarbonylmethyl-2-thiouridine), and ncm5U (5-carbamoylmethyl uridine). In the elongator complex, acts as a tRNA uridine(34) acetyltransferase by mediating formation of carboxymethyluridine in the wobble base at position 34 in tRNAs. May also act as a protein lysine acetyltransferase by mediating acetylation of target proteins; such activity is however unclear in vivo and recent evidences suggest that ELP3 primarily acts as a tRNA acetyltransferase. Involved in neurogenesis: regulates the migration and branching of projection neurons in the developing cerebral cortex, through a process depending on alpha-tubulin acetylation. Required for acetylation of GJA1 in the developing cerebral cortex. This chain is Elongator complex protein 3, found in Mus musculus (Mouse).